The sequence spans 260 residues: Transcription factor MYB4 (260 aa).

HTH myb-type domains lie at 12–64 and 65–119; these read AVEV…LNYL and RPGI…SKRS. 2 consecutive DNA-binding regions (H-T-H motif) follow at residues 40–64 and 92–115; these read WRML…LNYL and WSII…NTHL.

It is found in the nucleus. Transcription activator involved in the spatiotemporal regulation of flavonoid biosynthesis specifically in the corms of Montbretia. Activates the promoters of enzymes involved in the biosynthesis of the flavonol myricetin and the flavonol-glycoside montbretin A (MbA). MbA is a potent inhibitor of human pancreatic alpha-amylase and is being developed as drug candidate to treat type-2 diabetes. The chain is Transcription factor MYB4 from Crocosmia x crocosmiiflora (Montbretia).